The primary structure comprises 141 residues: Elongation factor G, chloroplastic (141 aa).

The tr-type G domain occupies 12 to 141 (KDYRNIGIMA…VPRICFVNKM (130 aa)). GTP contacts are provided by residues 21–28 (AHIDAGKT) and 85–89 (DTPGH).

Belongs to the TRAFAC class translation factor GTPase superfamily. Classic translation factor GTPase family. EF-G/EF-2 subfamily.

Its subcellular location is the plastid. It is found in the chloroplast. The protein operates within protein biosynthesis; polypeptide chain elongation. In terms of biological role, chloroplast-localized elongation factor EF-G involved in protein synthesis in plastids. Catalyzes the GTP-dependent ribosomal translocation step during translation elongation. During this step, the ribosome changes from the pre-translocational (PRE) to the post-translocational (POST) state as the newly formed A-site-bound peptidyl-tRNA and P-site-bound deacylated tRNA move to the P and E sites, respectively. Catalyzes the coordinated movement of the two tRNA molecules, the mRNA and conformational changes in the ribosome. The sequence is that of Elongation factor G, chloroplastic (fusA) from Pisum sativum (Garden pea).